The following is a 98-amino-acid chain: Co-chaperonin GroES (98 aa).

Belongs to the GroES chaperonin family. As to quaternary structure, heptamer of 7 subunits arranged in a ring. Interacts with the chaperonin GroEL.

The protein localises to the cytoplasm. Its function is as follows. Together with the chaperonin GroEL, plays an essential role in assisting protein folding. The GroEL-GroES system forms a nano-cage that allows encapsulation of the non-native substrate proteins and provides a physical environment optimized to promote and accelerate protein folding. GroES binds to the apical surface of the GroEL ring, thereby capping the opening of the GroEL channel. This Bartonella bacilliformis (strain ATCC 35685 / KC583 / Herrer 020/F12,63) protein is Co-chaperonin GroES.